Consider the following 209-residue polypeptide: Uracil phosphoribosyltransferase (209 aa).

5-phospho-alpha-D-ribose 1-diphosphate-binding positions include Arg-79, Arg-104, and 131–139; that span reads DPMLATGGS. Residues Ile-194 and 199-201 contribute to the uracil site; that span reads GDA. Asp-200 contributes to the 5-phospho-alpha-D-ribose 1-diphosphate binding site.

The protein belongs to the UPRTase family. Mg(2+) serves as cofactor.

It catalyses the reaction UMP + diphosphate = 5-phospho-alpha-D-ribose 1-diphosphate + uracil. It participates in pyrimidine metabolism; UMP biosynthesis via salvage pathway; UMP from uracil: step 1/1. With respect to regulation, allosterically activated by GTP. Catalyzes the conversion of uracil and 5-phospho-alpha-D-ribose 1-diphosphate (PRPP) to UMP and diphosphate. The sequence is that of Uracil phosphoribosyltransferase from Lysinibacillus sphaericus (strain C3-41).